The primary structure comprises 41 residues: Large ribosomal subunit protein bL36B (41 aa).

Belongs to the bacterial ribosomal protein bL36 family.

This chain is Large ribosomal subunit protein bL36B, found in Actinobacillus pleuropneumoniae serotype 5b (strain L20).